A 183-amino-acid polypeptide reads, in one-letter code: uncharacterized protein (183 aa).

The N-terminal stretch at M1–S29 is a signal peptide. A disordered region spans residues P149–G183. The segment covering P167–G183 has biased composition (basic and acidic residues).

Its subcellular location is the secreted. This is an uncharacterized protein from Homo sapiens (Human).